Reading from the N-terminus, the 451-residue chain is Subtilase-type proteinase psp3 (451 aa).

The N-terminal stretch at 1–20 (MRVSWISGLLLVAHLAPSSA) is a signal peptide. One can recognise an Inhibitor I9 domain in the interval 80–161 (YIVMFKPSVD…LVEPDRVMHV (82 aa)). The region spanning 169–451 (PWGLARVSHR…PNVLAFNNYE (283 aa)) is the Peptidase S8 domain. Residues aspartate 205, histidine 237, and serine 394 each act as charge relay system in the active site.

This sequence belongs to the peptidase S8 family.

The polypeptide is Subtilase-type proteinase psp3 (psp3) (Schizosaccharomyces pombe (strain 972 / ATCC 24843) (Fission yeast)).